Consider the following 1420-residue polypeptide: DNA-directed RNA polymerase subunit beta' (1420 aa).

Positions 70, 72, 85, and 88 each coordinate Zn(2+). Aspartate 464, aspartate 466, and aspartate 468 together coordinate Mg(2+). Zn(2+) is bound by residues cysteine 823, cysteine 897, cysteine 904, and cysteine 907.

Belongs to the RNA polymerase beta' chain family. The RNAP catalytic core consists of 2 alpha, 1 beta, 1 beta' and 1 omega subunit. When a sigma factor is associated with the core the holoenzyme is formed, which can initiate transcription. The cofactor is Mg(2+). Zn(2+) is required as a cofactor.

It carries out the reaction RNA(n) + a ribonucleoside 5'-triphosphate = RNA(n+1) + diphosphate. Its function is as follows. DNA-dependent RNA polymerase catalyzes the transcription of DNA into RNA using the four ribonucleoside triphosphates as substrates. The protein is DNA-directed RNA polymerase subunit beta' of Polynucleobacter necessarius subsp. necessarius (strain STIR1).